The primary structure comprises 248 residues: Probable phosphatase VCM66_A0854 (248 aa).

9 residues coordinate Zn(2+): histidine 8, histidine 10, histidine 16, histidine 41, glutamate 74, histidine 102, histidine 132, aspartate 194, and histidine 196.

It belongs to the PHP family. The cofactor is Zn(2+).

The polypeptide is Probable phosphatase VCM66_A0854 (Vibrio cholerae serotype O1 (strain M66-2)).